Reading from the N-terminus, the 1430-residue chain is Nephrocystin-4 (1430 aa).

The interval 824 to 1430 (MRMGNVGRPP…ETFCVKVRYE (607 aa)) is sufficient for basal bodies localization. Residues 828–857 (NVGRPPEKKLKRRETLPPSNSRIITMHDGR) form a disordered region.

Belongs to the NPHP4 family.

The protein localises to the cytoplasm. It localises to the cytoskeleton. It is found in the cilium basal body. Involved in the organization of apical junctions. Required for building functional cilia. Involved in the organization of the subapical actin network in multiciliated epithelial cells. Seems to recruit int to basal bodies of motile cilia which subsequently interacts with actin-modifying proteins such as daam1. May down-regulate the canonical Wnt pathway and promote the Wnt-PCP pathway. Acts as a negative regulator of the hippo pathway. This is Nephrocystin-4 (nphp4) from Xenopus laevis (African clawed frog).